Here is a 1233-residue protein sequence, read N- to C-terminus: EGNEYLVRKNVERLSLSEMNSLIHAFRRMQKDKSSDGFEAIASFHALPPLCPSPTAKHRHACCLHGMATFPHWHRLYVVQFEQALHRHGATVGVPYWDWTRPISKIPDFIASEKYSDPFTKIEVYNPFNHGHISFISEDTTTKREVSEYLFEHPVLGKQTWLFDNIALALEQTDYCDFEIQLEIVHNAIHSWIGGKEEHSLNHLHYAAYDPIFYLHHSNVDRLWVIWQELQKLRGLNAYESHCALELMKVPLKPFSFGAPYNLNDLTTKLSKPEDMFRYKDNFHYEYDILDINSMSINQIESSYIRHQKDHDRVFAGFLLSGFGSSAYATFEICIEGGECHEGSHFAVLGGSTEMPWAFDRLYKIEITDVLSDMHLAFDSAFTIKTKIVAQNGTELPASILPEATVIRIPPSKQDADIDIPLNHIRRNVESLDERDIQNLMAALTRVKKDESDHGFQTIASYHGSTLCPSPEEPKYACCLHGMPVFPHWHRVYLLHFEDSMRRHGSSVATPYWDWTQPGTKLPRLLADSDYYDAWTDNVTENPFLRGYITSEDTYTVRDVKPELFEIGGGEGSTLYQQVLLMLEQEDYCDFEVQFEVVHNSIHYLVGGHQKYAMSSLVYSSFDPIFYVHHSMVDRLWAIWQALQEHRHLPFDKAYCALEQLSFPMKPFVWESNPNLHTRAASTPQHLFDYNKLGYKYDDLEFHGMNIDQLENAIHKTQNKDRVFASFLLFGIKTSADVHLKLCKDETCEDAGVVFVLGGDNEMPWPFDRTYKMDITNVLHKMHIPLEDLYVHGSTIHLEVKIESVDGKVLDSSSLPVPSMIYVPAKEFTKEIEKEAVRGTIIRKNVNSLTPSDIKELRDAMAKVQADTSDNGYQKIASYHGIPLSCHYENGTAYACCQHGMVTFPNWHRLLTKQMEDALVAKGSHVGIPYWDWTTTFANLPVLVTEEKDNSFHHAHIDVANTDTTRSPRAQLFDDPEKGDKSFFYRQIALALEQTDFCDFEIQFEIGHNAIHSWVGGSSPYGMSTLHYTSYDPLFYLHHSNTDRIWSVWQALQKYRGLPYNTANCEINKLVKPLKPFNLDTNPNAVTKAHSTGATSFDYHKLGYDYDNLNFHGMTIPELEEHLKEIQHEDRVFAGFLLRTIGQSADVNFDVCTKDGECTFGGTFCILGGEHEMFWAFDRPFKYDITTSLKHLRLDAHDDFDIKVTIKGIDGHVLSNKYLSPPTVFLAPAKTTH.

The ODD stretch occupies residues 1–4 (EGNE). The ODE stretch occupies residues 5-422 (YLVRKNVERL…KQDADIDIPL (418 aa)). Residue His45 participates in Cu cation binding. Cys51 and Cys62 are joined by a disulfide. The segment at residues 63–65 (CLH) is a cross-link (2'-(S-cysteinyl)-histidine (Cys-His)). Cu cation-binding residues include His65, His74, His186, His190, and His217. Disulfide bonds link Cys176–Cys243 and Cys334–Cys340. Asn392 carries an N-linked (GlcNAc...) asparagine glycan. An ODF region spans residues 423 to 839 (NHIRRNVESL…KEIEKEAVRG (417 aa)). His463 contributes to the Cu cation binding site. The cysteines at positions 468 and 478 are disulfide-linked. The 2'-(S-cysteinyl)-histidine (Cys-His) cross-link spans 479 to 481 (CLH). Cu cation-binding residues include His481 and His490. Asn538 carries an N-linked (GlcNAc...) asparagine glycan. 2 cysteine pairs are disulfide-bonded: Cys589/Cys656 and Cys743/Cys748. Residues His599, His603, and His630 each contribute to the Cu cation site. An ODG region spans residues 840–1233 (TIIRKNVNSL…VFLAPAKTTH (394 aa)). A Cu cation-binding site is contributed by His880. Cys886 and Cys896 are disulfide-bonded. A glycan (N-linked (GlcNAc...) asparagine) is linked at Asn890. Positions 897–899 (CQH) form a cross-link, 2'-(S-cysteinyl)-histidine (Cys-His). Residues His899, His908, His1008, His1012, and His1039 each coordinate Cu cation. 2 disulfides stabilise this stretch: Cys998–Cys1065 and Cys1152–Cys1158.

It belongs to the tyrosinase family. Hemocyanin subfamily. In terms of assembly, decamers of large identical subunits (350 kDa), each containing 7 globular oxygen-binding domains: ODA, ODB, ODC, ODD, ODE, ODF, and ODG. The cofactor is Cu(2+).

In terms of biological role, hemocyanins are copper-containing oxygen carriers occurring freely dissolved in the hemolymph of many mollusks and arthropods. The sequence is that of Hemocyanin A-type, units Ode to Odg from Enteroctopus dofleini (North Pacific giant octopus).